A 303-amino-acid chain; its full sequence is Glycine--tRNA ligase alpha subunit (303 aa).

It belongs to the class-II aminoacyl-tRNA synthetase family. As to quaternary structure, tetramer of two alpha and two beta subunits.

It is found in the cytoplasm. The enzyme catalyses tRNA(Gly) + glycine + ATP = glycyl-tRNA(Gly) + AMP + diphosphate. This chain is Glycine--tRNA ligase alpha subunit (glyQ), found in Escherichia coli (strain K12).